A 246-amino-acid chain; its full sequence is tRNA (guanine-N(1)-)-methyltransferase (246 aa).

Residues glycine 113 and 133-138 contribute to the S-adenosyl-L-methionine site; that span reads IGDYVL.

It belongs to the RNA methyltransferase TrmD family. Homodimer.

The protein localises to the cytoplasm. It carries out the reaction guanosine(37) in tRNA + S-adenosyl-L-methionine = N(1)-methylguanosine(37) in tRNA + S-adenosyl-L-homocysteine + H(+). Its function is as follows. Specifically methylates guanosine-37 in various tRNAs. This chain is tRNA (guanine-N(1)-)-methyltransferase, found in Haemophilus influenzae (strain PittGG).